We begin with the raw amino-acid sequence, 505 residues long: Bifunctional pantoate ligase/cytidylate kinase (505 aa).

Positions 1-268 (MHQWRKHQQS…CGETRLIDHT (268 aa)) are pantoate--beta-alanine ligase. Residue 18 to 25 (MGALHRGH) participates in ATP binding. His-25 (proton donor) is an active-site residue. A (R)-pantoate-binding site is contributed by Gln-53. Residue Gln-53 participates in beta-alanine binding. 142–145 (GEKD) lines the ATP pocket. (R)-pantoate is bound at residue Gln-148. Residues Val-171 and 179–182 (CSSR) each bind ATP. The interval 269–505 (FLMSRQPIVA…PEEVWPTAGR (237 aa)) is cytidylate kinase.

It in the N-terminal section; belongs to the pantothenate synthetase family. This sequence in the C-terminal section; belongs to the cytidylate kinase family. Type 1 subfamily.

It is found in the cytoplasm. The catalysed reaction is (R)-pantoate + beta-alanine + ATP = (R)-pantothenate + AMP + diphosphate + H(+). It carries out the reaction CMP + ATP = CDP + ADP. It catalyses the reaction dCMP + ATP = dCDP + ADP. Its pathway is cofactor biosynthesis; (R)-pantothenate biosynthesis; (R)-pantothenate from (R)-pantoate and beta-alanine: step 1/1. Its function is as follows. Catalyzes the condensation of pantoate with beta-alanine in an ATP-dependent reaction via a pantoyl-adenylate intermediate. Functionally, catalyzes the transfer of a phosphate group from ATP to either CMP or dCMP to form CDP or dCDP and ADP, respectively. This is Bifunctional pantoate ligase/cytidylate kinase from Prochlorococcus marinus (strain MIT 9313).